A 154-amino-acid polypeptide reads, in one-letter code: Secreted RxLR effector protein PITG_21681 (154 aa).

Positions Met1 to Ala20 are cleaved as a signal peptide. Residues Ser42 to Glu70 form a disordered region. Positions Arg53–Arg72 match the RxLR-dEER motif.

This sequence belongs to the RxLR effector family.

The protein localises to the secreted. Its subcellular location is the host cell. In terms of biological role, secreted effector that is involved in host plant infection. Increases the susceptibility to P.infestans and reduces the plant growth. Affects the expression of host genes. This is Secreted RxLR effector protein PITG_21681 from Phytophthora infestans (strain T30-4) (Potato late blight agent).